A 461-amino-acid polypeptide reads, in one-letter code: UDP-glycosyltransferase 88B1 (461 aa).

UDP-alpha-D-glucose is bound by residues serine 278, 340–341, 358–366, and 380–383; these read WA, HCGWNSSLE, and YAEQ.

It belongs to the UDP-glycosyltransferase family.

May glycosylate diterpenes or flavonols in leaves. The sequence is that of UDP-glycosyltransferase 88B1 from Stevia rebaudiana (Stevia).